Here is a 38-residue protein sequence, read N- to C-terminus: Small ribosomal subunit protein uS12c (38 aa).

The disordered stretch occupies residues 1–26; sequence MPTIQQLIRNARQPIENRKKSPALRG.

It belongs to the universal ribosomal protein uS12 family. As to quaternary structure, part of the 30S ribosomal subunit.

The protein resides in the plastid. It localises to the chloroplast. Functionally, with S4 and S5 plays an important role in translational accuracy. Located at the interface of the 30S and 50S subunits. This Pinus contorta (Shore pine) protein is Small ribosomal subunit protein uS12c (rps12).